The sequence spans 274 residues: 4-deoxy-L-threo-5-hexosulose-uronate ketol-isomerase (274 aa).

Positions 192, 194, 199, and 241 each coordinate Zn(2+).

Belongs to the KduI family. Zn(2+) serves as cofactor.

The catalysed reaction is 5-dehydro-4-deoxy-D-glucuronate = 3-deoxy-D-glycero-2,5-hexodiulosonate. It participates in glycan metabolism; pectin degradation; 2-dehydro-3-deoxy-D-gluconate from pectin: step 4/5. Catalyzes the isomerization of 5-dehydro-4-deoxy-D-glucuronate to 3-deoxy-D-glycero-2,5-hexodiulosonate. This Cereibacter sphaeroides (strain ATCC 17025 / ATH 2.4.3) (Rhodobacter sphaeroides) protein is 4-deoxy-L-threo-5-hexosulose-uronate ketol-isomerase.